The following is a 122-amino-acid chain: Large ribosomal subunit protein uL14 (122 aa).

Belongs to the universal ribosomal protein uL14 family. As to quaternary structure, part of the 50S ribosomal subunit. Forms a cluster with proteins L3 and L19. In the 70S ribosome, L14 and L19 interact and together make contacts with the 16S rRNA in bridges B5 and B8.

Its function is as follows. Binds to 23S rRNA. Forms part of two intersubunit bridges in the 70S ribosome. This chain is Large ribosomal subunit protein uL14, found in Clostridioides difficile (strain 630) (Peptoclostridium difficile).